The sequence spans 20 residues: D-alpha-glycerophosphatase (20 aa).

Monomer. The cofactor is Mg(2+). Mn(2+) serves as cofactor.

Its subcellular location is the cytoplasm. The protein operates within polyol metabolism; glycerol biosynthesis. The sequence is that of D-alpha-glycerophosphatase from Bacillus licheniformis.